A 254-amino-acid polypeptide reads, in one-letter code: 3-deoxy-manno-octulosonate cytidylyltransferase (254 aa).

This sequence belongs to the KdsB family.

The protein localises to the cytoplasm. The enzyme catalyses 3-deoxy-alpha-D-manno-oct-2-ulosonate + CTP = CMP-3-deoxy-beta-D-manno-octulosonate + diphosphate. It participates in nucleotide-sugar biosynthesis; CMP-3-deoxy-D-manno-octulosonate biosynthesis; CMP-3-deoxy-D-manno-octulosonate from 3-deoxy-D-manno-octulosonate and CTP: step 1/1. The protein operates within bacterial outer membrane biogenesis; lipopolysaccharide biosynthesis. Functionally, activates KDO (a required 8-carbon sugar) for incorporation into bacterial lipopolysaccharide in Gram-negative bacteria. The sequence is that of 3-deoxy-manno-octulosonate cytidylyltransferase from Haemophilus influenzae (strain PittEE).